The primary structure comprises 273 residues: Dormancy associated translation inhibitor (273 aa).

In terms of assembly, interacts with human TLR2.

Functionally, involved in translation regulation. Can also stimulate macrophages and peripheral blood mononuclear cells (PBMC) to secrete important cytokines that may be significant in granuloma formation and its maintenance. Increases secretion of IFN-gamma, TNF-alpha, IL-1 beta and IL-8 through human Toll-like receptor 2 (TLR2) signaling pathway. This is Dormancy associated translation inhibitor from Mycobacterium tuberculosis (strain CDC 1551 / Oshkosh).